Reading from the N-terminus, the 337-residue chain is DNA-directed RNA polymerase subunit alpha (337 aa).

The tract at residues 1-233 (MVREKVTVST…DLFIPFLHME (233 aa)) is alpha N-terminal domain (alpha-NTD). The interval 265-337 (KKIALKSIFI…FVIDLAKNKF (73 aa)) is alpha C-terminal domain (alpha-CTD).

This sequence belongs to the RNA polymerase alpha chain family. In plastids the minimal PEP RNA polymerase catalytic core is composed of four subunits: alpha, beta, beta', and beta''. When a (nuclear-encoded) sigma factor is associated with the core the holoenzyme is formed, which can initiate transcription.

The protein localises to the plastid. It localises to the chloroplast. It carries out the reaction RNA(n) + a ribonucleoside 5'-triphosphate = RNA(n+1) + diphosphate. Functionally, DNA-dependent RNA polymerase catalyzes the transcription of DNA into RNA using the four ribonucleoside triphosphates as substrates. This chain is DNA-directed RNA polymerase subunit alpha, found in Nicotiana sylvestris (Wood tobacco).